We begin with the raw amino-acid sequence, 501 residues long: Glutamyl-tRNA(Gln) amidotransferase subunit A (501 aa).

Catalysis depends on charge relay system residues Lys-80 and Ser-155. Ser-179 (acyl-ester intermediate) is an active-site residue.

Belongs to the amidase family. GatA subfamily. Heterotrimer of A, B and C subunits.

The catalysed reaction is L-glutamyl-tRNA(Gln) + L-glutamine + ATP + H2O = L-glutaminyl-tRNA(Gln) + L-glutamate + ADP + phosphate + H(+). Its function is as follows. Allows the formation of correctly charged Gln-tRNA(Gln) through the transamidation of misacylated Glu-tRNA(Gln) in organisms which lack glutaminyl-tRNA synthetase. The reaction takes place in the presence of glutamine and ATP through an activated gamma-phospho-Glu-tRNA(Gln). The sequence is that of Glutamyl-tRNA(Gln) amidotransferase subunit A from Cutibacterium acnes (strain DSM 16379 / KPA171202) (Propionibacterium acnes).